We begin with the raw amino-acid sequence, 155 residues long: Gastrin-releasing peptide (155 aa).

A signal peptide spans 1 to 31 (MEGVLLFWKYRALFFLVLCSLVLCKVHLSQA). M60 bears the Methionine amide mark. The propeptide occupies 128–155 (FSGAEDNNLKEMLDYLYQMMNMKENTSS).

The protein belongs to the bombesin/neuromedin-B/ranatensin family. Brain and stomach. In the stomach GRP was localized, at the base of the gastric pits, to occasional cells whose distribution and appearance were consistent with that of gut neuroendocrine cells.

It is found in the secreted. It localises to the cytoplasmic vesicle. Its subcellular location is the secretory vesicle lumen. Its function is as follows. Stimulates the release of gastrin and other gastrointestinal hormones. The chain is Gastrin-releasing peptide (grp) from Bombina orientalis (Oriental fire-bellied toad).